A 208-amino-acid polypeptide reads, in one-letter code: Methenyltetrahydrofolate cyclohydrolase (208 aa).

Residues 25-46 form a helical membrane-spanning segment; it reads GAAAISGAMGAALVSMVCNLTI.

Belongs to the cyclodeaminase/cyclohydrolase family. In terms of assembly, homodimer.

It localises to the membrane. It catalyses the reaction (6R)-5,10-methenyltetrahydrofolate + H2O = (6R)-10-formyltetrahydrofolate + H(+). The protein operates within one-carbon metabolism; formaldehyde assimilation via serine pathway. Functionally, required for both C1 and C2 metabolism. This chain is Methenyltetrahydrofolate cyclohydrolase (fchA), found in Methylorubrum extorquens (strain ATCC 14718 / DSM 1338 / JCM 2805 / NCIMB 9133 / AM1) (Methylobacterium extorquens).